The following is a 209-amino-acid chain: MICOS complex subunit mic19 (209 aa).

Coiled-coil stretches lie at residues 48 to 86 and 127 to 156; these read LELE…DTGS and EVAA…GRKK.

It belongs to the MICOS complex subunit Mic19 family. As to quaternary structure, component of the mitochondrial contact site and cristae organizing system (MICOS) complex.

The protein resides in the mitochondrion inner membrane. Its function is as follows. Component of the MICOS complex, a large protein complex of the mitochondrial inner membrane that plays crucial roles in the maintenance of crista junctions, inner membrane architecture, and formation of contact sites to the outer membrane. Involved in osmoadaptation. This Emericella nidulans (strain FGSC A4 / ATCC 38163 / CBS 112.46 / NRRL 194 / M139) (Aspergillus nidulans) protein is MICOS complex subunit mic19.